An 896-amino-acid polypeptide reads, in one-letter code: Alanine--tRNA ligase (896 aa).

Residues His599, His603, Cys707, and His711 each coordinate Zn(2+).

It belongs to the class-II aminoacyl-tRNA synthetase family. Requires Zn(2+) as cofactor.

Its subcellular location is the cytoplasm. It catalyses the reaction tRNA(Ala) + L-alanine + ATP = L-alanyl-tRNA(Ala) + AMP + diphosphate. Functionally, catalyzes the attachment of alanine to tRNA(Ala) in a two-step reaction: alanine is first activated by ATP to form Ala-AMP and then transferred to the acceptor end of tRNA(Ala). Also edits incorrectly charged Ser-tRNA(Ala) and Gly-tRNA(Ala) via its editing domain. In Pyrobaculum calidifontis (strain DSM 21063 / JCM 11548 / VA1), this protein is Alanine--tRNA ligase.